Here is a 97-residue protein sequence, read N- to C-terminus: Large ribosomal subunit protein uL23 (97 aa).

The protein belongs to the universal ribosomal protein uL23 family. In terms of assembly, part of the 50S ribosomal subunit. Contacts protein L29, and trigger factor when it is bound to the ribosome.

Functionally, one of the early assembly proteins it binds 23S rRNA. One of the proteins that surrounds the polypeptide exit tunnel on the outside of the ribosome. Forms the main docking site for trigger factor binding to the ribosome. This chain is Large ribosomal subunit protein uL23, found in Clostridium perfringens (strain SM101 / Type A).